The sequence spans 826 residues: MAASRGRSKKRSNLELSPDNLPLRSSGRQAKKKAVEIPDEDEDGSSEKKYRKCEKAGCTAAYPVCFASASERCAKNGYTSRWYHLSCGEHFCNECFDHYYRSHKDGYDKYSAWKRVWTSNGKTEPSPKAFMADQQLPYWVQCTKPECGKWRQLTKEIQLTPHMARTYRCGMKPNTITKPDTPDHCSFPEDLRVLEVSNHWWYPMLIQPPLLKDSVAAPLLSAYYPDCVGMSPSCTSTHRATVTAATTTTGSASPGEMEPSKAAPSSLVLGMNRYFQPFYQPNECGKALCVRPDVMELDELYEFPEYSRDPTMYLALRNLILALWYTNCKEALTPQKCIPHIIVRGLVRIRCVQEVERILYFMTRKGLINTGVLTVAAGQHLLPKHYHNKSVLVVGAGPAGLAAARQLHNFGMKVTVLEAKDRIGGRVWDDKSFKGVVVGRGPQIVNGCINNPVALMCEQLGISMRKLGERCDLIQEGGRITDPTVDKRMDFHFNALLDVVSEWRKDKTLLQDVPLGEKIEEIYRAFVKESGIQFSELEGQVLQFHLSNLEYACGSSLHQVSARSWDHNEFFAQFAGDHTLLTPGYSTIIEKLAEGLDIRLKSPVQSIDYTGDEVQVTTTDGMGHSAQKVLVTVPLAILQRGAIQFNPPLSEKKMKAINSLGAGIIEKIALQFPYRFWDSKVQGADFFGHVPPSASQRGLFAVFYDMDSQQSVLMSVITGEAVASLRTMDDKQVLQQCMGILRELFKEQEIPEPTKYFVTRWSTEPWIQMAYSFVKTFGSGEAYDIIAEEIQGTVFFAGEATNRHFPQTVTGAYLSGVREASKIAAF.

Basic residues predominate over residues 1-11 (MAASRGRSKKR). The tract at residues 1–46 (MAASRGRSKKRSNLELSPDNLPLRSSGRQAKKKAVEIPDEDEDGSS) is disordered. Residues S17 and S26 each carry the phosphoserine modification. Residues C53, C58, C65, C73, H84, H90, C92, C95, C142, C147, C169, and C185 each coordinate Zn(2+). Residues 133 to 193 (DQQLPYWVQC…HCSFPEDLRV (61 aa)) form a CW-type zinc finger. At S253 the chain carries Phosphoserine. The tract at residues 279–298 (YQPNECGKALCVRPDVMELD) is GLYR1-binding. The SWIRM domain occupies 281-379 (PNECGKALCV…TGVLTVAAGQ (99 aa)). An FAD-binding site is contributed by 389 to 445 (KSVLVVGAGPAGLAAARQLHNFGMKVTVLEAKDRIGGRVWDDKSFKGVVVGRGPQIV). 3 histone H3-binding regions span residues 444–473 (IVNGCINNPVALMCEQLGISMRKLGERCDL), 493–504 (FNALLDVVSEWR), and 544–578 (FHLSNLEYACGSSLHQVSARSWDHNEFFAQFAGDH). The segment at 570 to 572 (FFA) is GLYR1-binding. FAD-binding positions include V604, E799, and 807 to 809 (QTV). Residues 802 to 818 (NRHFPQTVTGAYLSGVR) form a GLYR1-binding region.

The protein belongs to the flavin monoamine oxidase family. In terms of assembly, interacts with its cofactor GLYR1 at nucleosomes; this interaction stimulates H3K4me1 and H3K4me2 demethylation. In contrast to KDM1A, does not form a complex with RCOR1/CoREST. Possible accessory component of the polycomb repressive deubiquitinase (PR-DUB) complex, at least composed of BAP1, one of ASXL1, ASXL2 or (probably) ASXL3 and one of MBD5 or MBD6. The PR-DUB core associates with a number of accessory proteins, including FOXK1, FOXK2, KDM1B, HCFC1 and OGT; KDM1B specifically associates with ASXL2 PR-DUB complexes. It depends on FAD as a cofactor. Requires Zn(2+) as cofactor. In terms of tissue distribution, expressed in growing oocytes and in intestinal gland.

It is found in the nucleus. The protein resides in the chromosome. The enzyme catalyses N(6),N(6)-dimethyl-L-lysyl(4)-[histone H3] + 2 A + 2 H2O = L-lysyl(4)-[histone H3] + 2 formaldehyde + 2 AH2. It carries out the reaction N(6)-methyl-L-lysyl(4)-[histone H3] + A + H2O = L-lysyl(4)-[histone H3] + formaldehyde + AH2. Inhibited by tranylcypromine, but not by pargyline, deprenyl or rasagiline. Histone H3K4me1 and H3K4me2 demethylase activity is inhibited by DNA, this inhibition is released in complex with GLYR1. Functionally, histone demethylase that demethylates 'Lys-4' of histone H3, a specific tag for epigenetic transcriptional activation, thereby acting as a corepressor. Required for de novo DNA methylation of a subset of imprinted genes during oogenesis. Acts by oxidizing the substrate by FAD to generate the corresponding imine that is subsequently hydrolyzed. Demethylates both mono- and di-methylated 'Lys-4' of histone H3. Has no effect on tri-methylated 'Lys-4', mono-, di- or tri-methylated 'Lys-9', mono-, di- or tri-methylated 'Lys-27', mono-, di- or tri-methylated 'Lys-36' of histone H3, or on mono-, di- or tri-methylated 'Lys-20' of histone H4. Histone demethylase that demethylates 'Lys-4' of histone H3, a specific tag for epigenetic transcriptional activation, thereby acting as a corepressor. Required for de novo DNA methylation of a subset of imprinted genes during oogenesis. Acts by oxidizing the substrate by FAD to generate the corresponding imine that is subsequently hydrolyzed. Demethylates both mono- and di-methylated 'Lys-4' of histone H3. Has no effect on tri-methylated 'Lys-4', mono-, di- or tri-methylated 'Lys-9', mono-, di- or tri-methylated 'Lys-27', mono-, di- or tri-methylated 'Lys-36' of histone H3, or on mono-, di- or tri-methylated 'Lys-20' of histone H4. Alone, it is unable to demethylate H3K4me on nucleosomes and requires the presence of GLYR1 to achieve such activity, they form a multifunctional enzyme complex that modifies transcribed chromatin and facilitates Pol II transcription through nucleosomes. The protein is Lysine-specific histone demethylase 1B of Mus musculus (Mouse).